The primary structure comprises 53 residues: Small polypeptide DEVIL 16 (53 aa).

Residue N6 is glycosylated (N-linked (GlcNAc...) asparagine). The interval 14-45 is required for DVL/RTFL small polypeptide activity; the sequence is TFGQKCSHVVKKQRAKFYILRRCIAMLVCWHD. A helical membrane pass occupies residues 30 to 46; sequence FYILRRCIAMLVCWHDQ.

The protein belongs to the DVL/RTFL small polypeptides family. Mostly expressed in stems, flower buds, flowers and seedling shoots, to a lesser extent, in roots and young cauline leaves, but not in mature rosette leaves. Barely observed in cotyledons and leaf primordia.

Its subcellular location is the cell membrane. In terms of biological role, small polypeptide acting as a regulatory molecule which coordinates cellular responses required for differentiation, growth and development, probably by restricting polar cell proliferation in lateral organs (e.g. leaves) and coordinating socket cell recruitment and differentiation at trichome sites. Regulates the positional cue and cell proliferation along the body axis. The chain is Small polypeptide DEVIL 16 from Arabidopsis thaliana (Mouse-ear cress).